Here is a 276-residue protein sequence, read N- to C-terminus: Large ribosomal subunit protein uL2 (276 aa).

Disordered regions lie at residues 34–55 (LQPL…RHQG) and 221–276 (RGSV…RRTK). The span at 37 to 48 (LKNNAGRNNNGR) shows a compositional bias: polar residues.

It belongs to the universal ribosomal protein uL2 family. In terms of assembly, part of the 50S ribosomal subunit. Forms a bridge to the 30S subunit in the 70S ribosome.

Functionally, one of the primary rRNA binding proteins. Required for association of the 30S and 50S subunits to form the 70S ribosome, for tRNA binding and peptide bond formation. It has been suggested to have peptidyltransferase activity; this is somewhat controversial. Makes several contacts with the 16S rRNA in the 70S ribosome. This Enterococcus faecalis (strain ATCC 700802 / V583) protein is Large ribosomal subunit protein uL2.